We begin with the raw amino-acid sequence, 381 residues long: Protein YkfC (381 aa).

The Reverse transcriptase domain occupies 72 to 337 (LRDELLSGHY…DGFIFLGHRL (266 aa)). D166, D284, and D285 together coordinate Mg(2+).

This sequence belongs to the bacterial reverse transcriptase family.

This chain is Protein YkfC (ykfC), found in Escherichia coli (strain K12).